We begin with the raw amino-acid sequence, 262 residues long: MFGQTTSEYISHHLSFLKTGDGFWNVHIDTLFFSILAAVIFLFVFSRVGKKATTGVPGKMQCLVEIVVEWVNGIVKENFHGPRNVVAPLALTIFCWVFIMNAIDLIPVDFLPQFAGLFGIHYLRAVPTADISATLGMSICVFFLILFYTIKSKGFKGLVKEYTLHPFNHWAFIPVNFILETVTLLAKPISLAFRLFGNMYAGELIFILIAVMYSANMAIAALGIPLHLAWAIFHILVITLQAFIFMMLTVVYLSIAYNKADH.

Transmembrane regions (helical) follow at residues 26-46 (VHID…FVFS), 86-106 (VAPL…IDLI), 130-150 (DISA…FYTI), 204-226 (LIFI…GIPL), and 240-260 (LQAF…YNKA).

It belongs to the ATPase A chain family. F-type ATPases have 2 components, CF(1) - the catalytic core - and CF(0) - the membrane proton channel. CF(1) has five subunits: alpha(3), beta(3), gamma(1), delta(1), epsilon(1). CF(0) has three main subunits: a(1), b(2) and c(9-12). The alpha and beta chains form an alternating ring which encloses part of the gamma chain. CF(1) is attached to CF(0) by a central stalk formed by the gamma and epsilon chains, while a peripheral stalk is formed by the delta and b chains.

The protein resides in the cell inner membrane. Key component of the proton channel; it plays a direct role in the translocation of protons across the membrane. The protein is ATP synthase subunit a of Haemophilus influenzae (strain PittEE).